The primary structure comprises 135 residues: Cytochrome b5 (135 aa).

The region spanning 4–80 is the Cytochrome b5 heme-binding domain; that stretch reads SKVYSLAEVS…MDEMCVGDID (77 aa). Heme-binding residues include H39 and H63. Residues 106–126 form a helical membrane-spanning segment; the sequence is FIIKLLQFLVPLIILGVAVGI.

This sequence belongs to the cytochrome b5 family.

Its subcellular location is the endoplasmic reticulum membrane. The protein resides in the microsome membrane. Membrane bound hemoprotein which function as an electron carrier for several membrane bound oxygenases. The chain is Cytochrome b5 from Cuscuta reflexa (Southern Asian dodder).